A 482-amino-acid chain; its full sequence is MAIREIKDVERGEIVNKVEDLGKPFLTHEDDEKESENNESYLMVLFSTFVAVCGSFEFGSCVGYSAPTQSSIRQDLNLSLAEFSMFGSILTIGAMLGAVMSGKISDFSGRKGAMRTSACFCITGWLAVFFTKGALLLDVGRFFTGYGIGVFSYVVPVYIAEISPKNLRGGLTTLNQLMIVIGSSVSFLIGSLISWKTLALTGLAPCIVLLFGLCFIPESPRWLAKAGHEKEFRVALQKLRGKDADITNEADGIQVSIQALEILPKARIQDLVSKKYGRSVIIGVSLMVFQQFVGINGIGFYASETFVKAGFTSGKLGTIAIACVQVPITVLGTILIDKSGRRPLIMISAGGIFLGCILTGTSFLLKGQSLLLEWVPSLAVGGVLIYVAAFSIGMGPVPWVIMSEIFPINVKGIAGSLVVLVNWSGAWAVSYTFNFLMSWSSPGTFYLYSAFAAATIIFVAKMVPETKGKTLEEIQACIRRET.

Transmembrane regions (helical) follow at residues 42-62 (LMVL…GSCV), 80-100 (LAEF…GAVM), 117-137 (SACF…ALLL), 142-162 (FFTG…IAEI), 173-193 (TLNQ…GSLI), 197-217 (TLAL…CFIP), 280-300 (VIIG…GIGF), 316-336 (LGTI…TILI), 344-364 (LIMI…TSFL), 382-402 (GVLI…WVIM), 413-433 (IAGS…SYTF), and 443-463 (GTFY…AKMV).

This sequence belongs to the major facilitator superfamily. Sugar transporter (TC 2.A.1.1) family.

The protein resides in the membrane. Its function is as follows. Sugar transporter. The sequence is that of Sugar transporter ERD6-like 16 from Arabidopsis thaliana (Mouse-ear cress).